Reading from the N-terminus, the 276-residue chain is ATP synthase subunit a (276 aa).

7 consecutive transmembrane segments (helical) span residues 49-69 (KPML…FAAA), 109-129 (YLFT…IPFI), 137-157 (SGMV…AGIS), 173-193 (GIRG…NILV), 203-223 (FANM…GEYI), 232-252 (APVG…EMLI), and 253-273 (QFLQ…GAVA).

This sequence belongs to the ATPase A chain family. In terms of assembly, F-type ATPases have 2 components, CF(1) - the catalytic core - and CF(0) - the membrane proton channel. CF(1) has five subunits: alpha(3), beta(3), gamma(1), delta(1), epsilon(1). CF(0) has three main subunits: a(1), b(2) and c(9-12). The alpha and beta chains form an alternating ring which encloses part of the gamma chain. CF(1) is attached to CF(0) by a central stalk formed by the gamma and epsilon chains, while a peripheral stalk is formed by the delta and b chains.

Its subcellular location is the cell membrane. Key component of the proton channel; it plays a direct role in the translocation of protons across the membrane. This is ATP synthase subunit a from Nocardioides sp. (strain ATCC BAA-499 / JS614).